The sequence spans 522 residues: Maturase K (522 aa).

This sequence belongs to the intron maturase 2 family. MatK subfamily.

The protein resides in the plastid. Its subcellular location is the chloroplast. Functionally, usually encoded in the trnK tRNA gene intron. Probably assists in splicing its own and other chloroplast group II introns. In Pillansia templemannii, this protein is Maturase K.